Reading from the N-terminus, the 299-residue chain is Elongation factor Ts (299 aa).

Residues 82–85 (TDFV) are involved in Mg(2+) ion dislocation from EF-Tu.

It belongs to the EF-Ts family.

The protein resides in the cytoplasm. Its function is as follows. Associates with the EF-Tu.GDP complex and induces the exchange of GDP to GTP. It remains bound to the aminoacyl-tRNA.EF-Tu.GTP complex up to the GTP hydrolysis stage on the ribosome. The polypeptide is Elongation factor Ts (Dechloromonas aromatica (strain RCB)).